Consider the following 1156-residue polypeptide: Pesticidal crystal protein Cry9Aa (1156 aa).

Residues 1 to 23 (MNQNKHGIIGASNCGCASDDVAK) constitute a propeptide, removed in mature form.

The protein belongs to the delta endotoxin family.

Functionally, promotes colloidosmotic lysis by binding to the midgut epithelial cells of insects. This protein is toxic to Galleria mellonella. This is Pesticidal crystal protein Cry9Aa (cry9Aa) from Bacillus thuringiensis subsp. galleriae.